The sequence spans 275 residues: Autophagy protein 5 (275 aa).

Residue Met1 is modified to N-acetylmethionine. Lys130 is covalently cross-linked (Glycyl lysine isopeptide (Lys-Gly) (interchain with G-Cter in ATG12)).

This sequence belongs to the ATG5 family. In terms of assembly, forms a conjugate with ATG12. Part of the minor complex composed of 4 sets of ATG12-ATG5 and ATG16L1 (400 kDa); this complex interacts with ATG3 leading to disruption of ATG7 interaction and promotion of ATG8-like proteins lipidation. Forms an 800-kDa complex composed of ATG12-ATG5 and ATG16L2. The ATG12-ATG5 conjugate interacts with RAB33A; this interaction is bridged by ATG16L1 and promotes ATG12-ATG5-ATG16L1 complex recruitment to phagophores. Interacts with TECPR1; the interaction is direct and does not take place when ATG16L1 is associated with the ATG5-ATG12 conjugate. Interacts with DHX58/RIG-1, IFIH1/MDA5 and MAVS/IPS-1 in monomeric form as well as in ATG12-ATG5 conjugate form. The interaction with MAVS is further enhanced upon vesicular stomatitis virus (VSV) infection. Interacts with ATG3. Interacts with ATG7 and ATG10. Interacts with FADD. Interacts with Bassoon/BSN; this interaction is important for the regulation of presynaptic autophagy. Interacts with ATG16L2. Conjugated to ATG12; which is essential for autophagy, but is not required for association with isolation membrane. Post-translationally, acetylated by EP300.

The protein resides in the cytoplasm. It is found in the preautophagosomal structure membrane. Involved in autophagic vesicle formation. Conjugation with ATG12, through a ubiquitin-like conjugating system involving ATG7 as an E1-like activating enzyme and ATG10 as an E2-like conjugating enzyme, is essential for its function. The ATG12-ATG5 conjugate acts as an E3-like enzyme which is required for lipidation of ATG8 family proteins and their association to the vesicle membranes. Involved in mitochondrial quality control after oxidative damage, and in subsequent cellular longevity. Plays a critical role in multiple aspects of lymphocyte development and is essential for both B and T lymphocyte survival and proliferation. Required for optimal processing and presentation of antigens for MHC II. Involved in the maintenance of axon morphology and membrane structures, as well as in normal adipocyte differentiation. Promotes primary ciliogenesis through removal of OFD1 from centriolar satellites and degradation of IFT20 via the autophagic pathway. As part of the ATG8 conjugation system with ATG12 and ATG16L1, required for recruitment of LRRK2 to stressed lysosomes and induction of LRRK2 kinase activity in response to lysosomal stress. Functionally, may play an important role in the apoptotic process, possibly within the modified cytoskeleton. Its expression is a relatively late event in the apoptotic process, occurring downstream of caspase activity. Plays a crucial role in IFN-gamma-induced autophagic cell death by interacting with FADD. In Bos taurus (Bovine), this protein is Autophagy protein 5.